Reading from the N-terminus, the 427-residue chain is Glutamyl-tRNA reductase (427 aa).

Substrate is bound by residues 49-52 (TCNR), serine 109, 114-116 (EGQ), and glutamine 120. Catalysis depends on cysteine 50, which acts as the Nucleophile. 188-193 (GAGKMA) is an NADP(+) binding site.

The protein belongs to the glutamyl-tRNA reductase family. In terms of assembly, homodimer.

The catalysed reaction is (S)-4-amino-5-oxopentanoate + tRNA(Glu) + NADP(+) = L-glutamyl-tRNA(Glu) + NADPH + H(+). It functions in the pathway porphyrin-containing compound metabolism; protoporphyrin-IX biosynthesis; 5-aminolevulinate from L-glutamyl-tRNA(Glu): step 1/2. It participates in porphyrin-containing compound metabolism; chlorophyll biosynthesis. Feedback inhibition by heme. Functionally, catalyzes the NADPH-dependent reduction of glutamyl-tRNA(Glu) to glutamate 1-semialdehyde (GSA). This chain is Glutamyl-tRNA reductase, found in Synechocystis sp. (strain ATCC 27184 / PCC 6803 / Kazusa).